Here is a 204-residue protein sequence, read N- to C-terminus: Ras-related and estrogen-regulated growth inhibitor-like protein (204 aa).

Positions 1–204 (MNDVKLTVLG…NVFGKRRKSV (204 aa)) are small GTPase-like. GTP is bound by residues 10 to 17 (GGEGTGKS), 57 to 63 (DPCSQPQ), and 122 to 125 (NKQD).

It belongs to the small GTPase superfamily. Ras family.

The enzyme catalyses GTP + H2O = GDP + phosphate + H(+). In terms of biological role, binds GDP/GTP and may possess intrinsic GTPase activity. This Bos taurus (Bovine) protein is Ras-related and estrogen-regulated growth inhibitor-like protein (RERGL).